Here is a 215-residue protein sequence, read N- to C-terminus: MNPFVIAIDGPAASGKGTLARKIAAHYHFHHLDTGLTYRSVAHALLQQGLTCDDETSAIAHAKKLDLNILNPNLLNAHEIGEAASKIATIPAVRKILVAKQRDFIKIPPGSVLDGRDIGTVVCPDADIKFYIVANIQTRAKRRYQEILKRGRHADYQKILADLKQRDERDMTRQQSPLKSAENAHLLDTSELSIEEAFAAACTLIDPLIKARAAL.

Residue 10-18 (GPAASGKGT) participates in ATP binding.

Belongs to the cytidylate kinase family. Type 1 subfamily.

It is found in the cytoplasm. It catalyses the reaction CMP + ATP = CDP + ADP. The enzyme catalyses dCMP + ATP = dCDP + ADP. The sequence is that of Cytidylate kinase from Bartonella bacilliformis (strain ATCC 35685 / KC583 / Herrer 020/F12,63).